The chain runs to 167 residues: Leukotoxin-activating lysine-acyltransferase LktC serotype A1 (167 aa).

Active-site residues include His22 and Asp91.

The protein belongs to the RTX toxin acyltransferase family.

It localises to the cytoplasm. It catalyses the reaction a fatty acyl-[ACP] + L-lysyl-[protein] = N(6)-(fatty acyl)-L-lysyl-[protein] + holo-[ACP] + H(+). Its function is as follows. Involved in fatty acylation of the protoxin (LktA) at two internal lysine residues, thereby converting it to the active toxin. The chain is Leukotoxin-activating lysine-acyltransferase LktC serotype A1 (lktC) from Mannheimia haemolytica (Pasteurella haemolytica).